A 1405-amino-acid chain; its full sequence is DNA-directed RNA polymerase subunit beta' (1405 aa).

The Zn(2+) site is built by Cys-70, Cys-72, Cys-85, and Cys-88. Mg(2+) is bound by residues Asp-460, Asp-462, and Asp-464. The Zn(2+) site is built by Cys-814, Cys-888, Cys-895, and Cys-898.

Belongs to the RNA polymerase beta' chain family. As to quaternary structure, the RNAP catalytic core consists of 2 alpha, 1 beta, 1 beta' and 1 omega subunit. When a sigma factor is associated with the core the holoenzyme is formed, which can initiate transcription. Mg(2+) serves as cofactor. Zn(2+) is required as a cofactor.

The catalysed reaction is RNA(n) + a ribonucleoside 5'-triphosphate = RNA(n+1) + diphosphate. Its function is as follows. DNA-dependent RNA polymerase catalyzes the transcription of DNA into RNA using the four ribonucleoside triphosphates as substrates. This Shewanella sp. (strain MR-7) protein is DNA-directed RNA polymerase subunit beta'.